A 641-amino-acid polypeptide reads, in one-letter code: MEGSGKLAMVEDAVEYHLFLIPDKARGTEEHREILQKYIERIMTQFAPILVPYIWQNQPFNLKYKPAKGGVPAHMYGMTKFGDNIEDEWFIVYVIKQITKEFPELVARVEDNDGEFLLIEAADFLPKWLDPDNSANRVFFHHGELCIIPVPRKSERIPWLPMTPPTIQQALSIISAHPEAVLASESIQAAVDRRVSGYPERVEASLHRAHCFLPAGIVAVLKQQPRLLSAAVQAFYLRDPIDLRACRVFKTFLPETRIMASVTFTKCLYAQLVQQKFVPDRRSGYGLPPPSHPQYRAYELGMKLAHGFEILCSKCSPHFSDSRKSLVTASPLWASFLESLKRNDYFKGLMDGSAQYQERLEMAKNYFQLSIHRPESSLAMSPGEEILTVLQTQPFDVAELKTEEADLPPEDDDQWLDLSPDQLDQLLQDAAGRKESQPGPQKEELQNYDVAQVSDSMKAFISKVSSHKGAELPRDPSEAPITFDADSFLNYFDKILGAKPQESDSEDDPGEEDVEGVDSDDDVGFEAQESESLKGALGSLKSYMARMDQELAHTSMGRSFTTRERLNKDPPSHTANDNSDEEDSGAGDCAVEAVDVDLNLISNILESYSSQAGLAGPASNLLHSMGVRLPDNADHNPQVSQ.

Positions 439–641 (GPQKEELQNY…NADHNPQVSQ (203 aa)) are transcription activation. The interval 481–497 (ITFDADSFLNYFDKILG) is involved in nuclear export. Disordered regions lie at residues 499-521 (KPQE…DSDD) and 554-586 (TSMG…DSGA). The tract at residues 502-531 (ESDSEDDPGEEDVEGVDSDDDVGFEAQESE) is acidic region required for transactivation activity. Phosphoserine occurs at positions 503, 505, and 519. Over residues 503–521 (SDSEDDPGEEDVEGVDSDD) the composition is skewed to acidic residues. The span at 561-571 (TTRERLNKDPP) shows a compositional bias: basic and acidic residues.

Belongs to the ECD family. In terms of assembly, interacts with TP53, MDM2, TXNIP. Interacts (phosphorylated) with PIH1D1. Interacts with RUVBL1 mediating the PIH1D1-independent association with the R2TP complex. Interacts with RB1, RBL1 and RBL2; ECD competes with E2F1 for binding to hypophospshorylated RB1. Interacts with EP300. Interacts with DDX39A. In terms of processing, phosphorylated predominantly by CK2 on two serine-containing clusters; involved in cell cycle regulation activity.

It is found in the cytoplasm. The protein resides in the nucleus. In terms of biological role, regulator of p53/TP53 stability and function. Inhibits MDM2-mediated degradation of p53/TP53 possibly by cooperating in part with TXNIP. May be involved transcriptional regulation. In vitro has intrinsic transactivation activity enhanced by EP300. May be a transcriptional activator required for the expression of glycolytic genes. Involved in regulation of cell cycle progression. Proposed to disrupt Rb-E2F binding leading to transcriptional activation of E2F proteins. The cell cycle -regulating function may depend on its RUVBL1-mediated association with the R2TP complex. May play a role in regulation of pre-mRNA splicing. Participates together with DDX39A in mRNA nuclear export. This chain is Protein ecdysoneless homolog (Ecd), found in Mus musculus (Mouse).